Here is a 208-residue protein sequence, read N- to C-terminus: ATP phosphoribosyltransferase (208 aa).

It belongs to the ATP phosphoribosyltransferase family. Short subfamily. As to quaternary structure, heteromultimer composed of HisG and HisZ subunits.

The protein localises to the cytoplasm. It catalyses the reaction 1-(5-phospho-beta-D-ribosyl)-ATP + diphosphate = 5-phospho-alpha-D-ribose 1-diphosphate + ATP. It participates in amino-acid biosynthesis; L-histidine biosynthesis; L-histidine from 5-phospho-alpha-D-ribose 1-diphosphate: step 1/9. In terms of biological role, catalyzes the condensation of ATP and 5-phosphoribose 1-diphosphate to form N'-(5'-phosphoribosyl)-ATP (PR-ATP). Has a crucial role in the pathway because the rate of histidine biosynthesis seems to be controlled primarily by regulation of HisG enzymatic activity. This Thermotoga maritima (strain ATCC 43589 / DSM 3109 / JCM 10099 / NBRC 100826 / MSB8) protein is ATP phosphoribosyltransferase (hisG).